The primary structure comprises 542 residues: Katanin p60 ATPase-containing subunit A-like 2 (542 aa).

The LisH domain maps to 25–57; the sequence is RRKNLLILIMHYLLQEGYMDSANSLEQETKISL. Disordered stretches follow at residues 94-126 and 142-168; these read LDHDSRVQSKPRSAGKLRRAGSNSTQGLPRIAQ and HAHQKALSRENSKQENGGNSPREASEI. Over residues 114-126 the composition is skewed to polar residues; sequence GSNSTQGLPRIAQ. ATP is bound at residue 298–305; that stretch reads GPPGTGKT.

This sequence belongs to the AAA ATPase family. Katanin p60 subunit A1 subfamily. A-like 2 sub-subfamily.

The protein resides in the cytoplasm. Its subcellular location is the cytoskeleton. The protein localises to the spindle. It is found in the spindle pole. The enzyme catalyses n ATP + n H2O + a microtubule = n ADP + n phosphate + (n+1) alpha/beta tubulin heterodimers.. In terms of biological role, severs microtubules in vitro in an ATP-dependent manner. This activity may promote rapid reorganization of cellular microtubule arrays. The polypeptide is Katanin p60 ATPase-containing subunit A-like 2 (katnal2) (Xenopus tropicalis (Western clawed frog)).